Consider the following 387-residue polypeptide: Ferrochelatase (387 aa).

Residues 1–318 (MGRVGVLLLN…VFIDALAQMV (318 aa)) are ferrochelatase. The Fe cation site is built by histidine 196 and glutamate 277. A hlip domain region spans residues 319–387 (MDSLNDPPCT…QGPLHFVGLL (69 aa)).

The protein in the N-terminal section; belongs to the ferrochelatase family. It in the C-terminal section; belongs to the Hlip family.

Its subcellular location is the cytoplasm. The catalysed reaction is heme b + 2 H(+) = protoporphyrin IX + Fe(2+). Its pathway is porphyrin-containing compound metabolism; protoheme biosynthesis; protoheme from protoporphyrin-IX: step 1/1. Catalyzes the ferrous insertion into protoporphyrin IX. In terms of biological role, the Hlip proteins might regulate tetrapyrrole biosynthesis, maybe at the level of aminolevulinic acid synthesis. Deletion of 4 to 5 members of the Hlip family (always including this member) suggests the proteins are involved in regulation of chlorophyll biosynthesis, in stabilization of chlorophyll-binding proteins and/or in reuse of chlorophylls, and may regulate tetrapyrrole biosynthesis. The Hlip proteins probably stabilize PSII assembly intermediates. The protein is Ferrochelatase of Synechocystis sp. (strain ATCC 27184 / PCC 6803 / Kazusa).